Reading from the N-terminus, the 165-residue chain is Protein SprT (165 aa).

Residues 19-163 (REKLAQANLK…RCVKCGEPLV (145 aa)) form the SprT-like domain. Zn(2+) is bound at residue His78. Glu79 is a catalytic residue. His82 is a Zn(2+) binding site.

Belongs to the SprT family. The cofactor is Zn(2+).

The protein localises to the cytoplasm. This Enterobacter sp. (strain 638) protein is Protein SprT.